Here is a 304-residue protein sequence, read N- to C-terminus: Lipoprotein signal peptidase (304 aa).

Helical transmembrane passes span 28–48, 86–106, and 112–132; these read IKIKYPILAVMGFFVLLIVFV, PAVPYLLQSLLTIIFLITFIF, and LIVLLPLITFGGLANVIDRSV. Residues D148 and D163 contribute to the active site. Residues 163-183 form a helical membrane-spanning segment; the sequence is DICIVTGFALIFLTFVVDIFL.

Belongs to the peptidase A8 family.

It localises to the cell membrane. The enzyme catalyses Release of signal peptides from bacterial membrane prolipoproteins. Hydrolyzes -Xaa-Yaa-Zaa-|-(S,diacylglyceryl)Cys-, in which Xaa is hydrophobic (preferably Leu), and Yaa (Ala or Ser) and Zaa (Gly or Ala) have small, neutral side chains.. It functions in the pathway protein modification; lipoprotein biosynthesis (signal peptide cleavage). Its function is as follows. This protein specifically catalyzes the removal of signal peptides from prolipoproteins. This chain is Lipoprotein signal peptidase, found in Mycoplasmoides gallisepticum (strain R(low / passage 15 / clone 2)) (Mycoplasma gallisepticum).